A 468-amino-acid chain; its full sequence is Serine--tRNA ligase (468 aa).

272–274 (TAE) contributes to the L-serine binding site. 303–305 (RAE) provides a ligand contact to ATP. Position 326 (glutamate 326) interacts with L-serine. Position 390–393 (390–393 (EISS)) interacts with ATP. L-serine is bound at residue serine 426.

Belongs to the class-II aminoacyl-tRNA synthetase family. Type-1 seryl-tRNA synthetase subfamily. As to quaternary structure, homodimer. The tRNA molecule binds across the dimer.

It is found in the cytoplasm. It catalyses the reaction tRNA(Ser) + L-serine + ATP = L-seryl-tRNA(Ser) + AMP + diphosphate + H(+). The catalysed reaction is tRNA(Sec) + L-serine + ATP = L-seryl-tRNA(Sec) + AMP + diphosphate + H(+). It functions in the pathway aminoacyl-tRNA biosynthesis; selenocysteinyl-tRNA(Sec) biosynthesis; L-seryl-tRNA(Sec) from L-serine and tRNA(Sec): step 1/1. Catalyzes the attachment of serine to tRNA(Ser). Is also able to aminoacylate tRNA(Sec) with serine, to form the misacylated tRNA L-seryl-tRNA(Sec), which will be further converted into selenocysteinyl-tRNA(Sec). The sequence is that of Serine--tRNA ligase from Xanthobacter autotrophicus (strain ATCC BAA-1158 / Py2).